Consider the following 820-residue polypeptide: Sucrose synthase 2 (820 aa).

The GT-B glycosyltransferase stretch occupies residues 276-753; the sequence is MVFNVVILSP…GLKRIYEKYT (478 aa).

The protein belongs to the glycosyltransferase 1 family. Plant sucrose synthase subfamily.

The enzyme catalyses an NDP-alpha-D-glucose + D-fructose = a ribonucleoside 5'-diphosphate + sucrose + H(+). Its function is as follows. Sucrose-cleaving enzyme that provides UDP-glucose and fructose for various metabolic pathways. The sequence is that of Sucrose synthase 2 from Tulipa gesneriana (Garden tulip).